Consider the following 388-residue polypeptide: 4-hydroxy-3-methylbut-2-en-1-yl diphosphate synthase (flavodoxin) (388 aa).

[4Fe-4S] cluster contacts are provided by Cys-281, Cys-284, Cys-316, and Glu-323.

The protein belongs to the IspG family. It depends on [4Fe-4S] cluster as a cofactor.

The catalysed reaction is (2E)-4-hydroxy-3-methylbut-2-enyl diphosphate + oxidized [flavodoxin] + H2O + 2 H(+) = 2-C-methyl-D-erythritol 2,4-cyclic diphosphate + reduced [flavodoxin]. It functions in the pathway isoprenoid biosynthesis; isopentenyl diphosphate biosynthesis via DXP pathway; isopentenyl diphosphate from 1-deoxy-D-xylulose 5-phosphate: step 5/6. In terms of biological role, converts 2C-methyl-D-erythritol 2,4-cyclodiphosphate (ME-2,4cPP) into 1-hydroxy-2-methyl-2-(E)-butenyl 4-diphosphate. This Paenarthrobacter aurescens (strain TC1) protein is 4-hydroxy-3-methylbut-2-en-1-yl diphosphate synthase (flavodoxin).